A 242-amino-acid polypeptide reads, in one-letter code: Protein HTATIP2 (242 aa).

Position 2 is an N-acetylalanine (Ala-2). The tract at residues 2 to 25 is required for interaction with elongation factor EEF1A1; the sequence is AETEALSKLREDFRMQNKSVFILG. Residues Ser-27, Gly-28, Glu-29, Thr-30, Arg-52, Arg-53, Leu-92, Gly-93, Tyr-143, Lys-147, Leu-170, and Arg-178 each coordinate NADPH. Tyr-143 acts as the Proton acceptor in catalysis. Lys-147 is an active-site residue.

Monomer. Forms homodimers during oxidative stress. Interacts (via N-terminus) with elongation factor EEF1A1 (via middle-region); the interaction is direct and competes with EEF1A1 binding to guanyl-nucleotide exchange factor EEF1B2, thereby inhibiting GDP for GTP exchange and reactivation of EEF1A1. Interacts with nuclear transport receptors XPO4, IPO5/RANBP5, IPO7, IPO9 and KPNB1 as well as GCN1L1/GCN1 and LRPPRC probably through their HEAT repeats. Binds NCOA5/CIA. In terms of assembly, interacts (via N-terminus) with proteasome subunit PSMD4/s5a. As to quaternary structure, (Microbial infection) Interacts with HIV-1 Tat (via activation domain). High levels in liver, lung, skeletal muscle, pancreas and placenta. Moderate levels in heart and kidney. Low levels in brain. Not expressed or low levels in variant small cell lung carcinomas, 33% of hepatocellular carcinomas and neuroblastomas. Levels are reduced in the heart of patients with hypertrophic cardiomyopathy and failing hearts.

Its subcellular location is the cytoplasm. In terms of biological role, represses translation by preventing reactivation of elongation factor eEF1A. May also inhibit nuclear import by competing with nuclear import substrates for binding to a subset of nuclear transport receptors. Has additionally been proposed to act as a redox sensor involved in cellular oxidative stress surveillance. In Homo sapiens (Human), this protein is Protein HTATIP2.